The chain runs to 605 residues: Pyruvate decarboxylase 1 (605 aa).

2 residues coordinate substrate: Asp-67 and His-154. Residues 432–514 (DSWFNCQKLR…FLINNGGYTI (83 aa)) form a thiamine pyrophosphate binding region. Asp-482, Asn-509, and Gly-511 together coordinate Mg(2+). Glu-515 is a binding site for substrate.

It belongs to the TPP enzyme family. Homotetramer. A metal cation is required as a cofactor. It depends on thiamine diphosphate as a cofactor.

The catalysed reaction is a 2-oxocarboxylate + H(+) = an aldehyde + CO2. The protein is Pyruvate decarboxylase 1 (PDC1) of Oryza sativa subsp. japonica (Rice).